The chain runs to 439 residues: Xaa-Pro dipeptidase (439 aa).

Residues D244, D255, H335, E380, and E419 each contribute to the Mn(2+) site.

Belongs to the peptidase M24B family. Bacterial-type prolidase subfamily. It depends on Mn(2+) as a cofactor.

It carries out the reaction Xaa-L-Pro dipeptide + H2O = an L-alpha-amino acid + L-proline. Its function is as follows. Splits dipeptides with a prolyl residue in the C-terminal position. This Shewanella sp. (strain ANA-3) protein is Xaa-Pro dipeptidase.